The chain runs to 229 residues: Urease accessory protein UreF (229 aa).

This sequence belongs to the UreF family. In terms of assembly, ureD, UreF and UreG form a complex that acts as a GTP-hydrolysis-dependent molecular chaperone, activating the urease apoprotein by helping to assemble the nickel containing metallocenter of UreC. The UreE protein probably delivers the nickel.

The protein resides in the cytoplasm. Functionally, required for maturation of urease via the functional incorporation of the urease nickel metallocenter. The protein is Urease accessory protein UreF of Staphylococcus epidermidis (strain ATCC 12228 / FDA PCI 1200).